The primary structure comprises 364 residues: Nucleoporin SEH1 (364 aa).

WD repeat units lie at residues 10 to 49 (DHKD…EWHC), 55 to 96 (THSG…SNDK), 111 to 152 (DSRT…NLSQ), 160 to 210 (SCKL…RKYA), 217 to 258 (TVTD…RESA), and 276 to 315 (SHNS…NWKC).

Belongs to the WD repeat SEC13 family. Component of the Nup107-160 subcomplex of the nuclear pore complex (NPC). The Nup107-160 subcomplex includes NUP160, NUP133, NUP107, NUP98, NUP85, NUP43, NUP37, SEH1 and SEC13. Component of the GATOR2 subcomplex, composed of MIOS, SEC13, SEH1L, WDR24 and WDR59. The GATOR2 complex interacts with CASTOR1 and CASTOR2; the interaction is negatively regulated by arginine. The GATOR2 complex interacts with SESN1, SESN2 and SESN3; the interaction is negatively regulated by amino acids.

The protein localises to the chromosome. It is found in the centromere. It localises to the kinetochore. Its subcellular location is the nucleus. The protein resides in the nuclear pore complex. The protein localises to the lysosome membrane. With respect to regulation, the GATOR2 complex is negatively regulated by the upstream amino acid sensors CASTOR1 and SESN2, which sequester the GATOR2 complex in absence of amino acids. In the presence of abundant amino acids, GATOR2 is released from CASTOR1 and SESN2 and activated. Functionally, component of the Nup107-160 subcomplex of the nuclear pore complex (NPC). The Nup107-160 subcomplex is required for the assembly of a functional NPC. The Nup107-160 subcomplex is also required for normal kinetochore microtubule attachment, mitotic progression and chromosome segregation. This subunit plays a role in recruitment of the Nup107-160 subcomplex to the kinetochore. In terms of biological role, as a component of the GATOR2 complex, functions as an activator of the amino acid-sensing branch of the mTORC1 signaling pathway. The GATOR2 complex indirectly activates mTORC1 through the inhibition of the GATOR1 subcomplex. GATOR2 probably acts as an E3 ubiquitin-protein ligase toward GATOR1. In the presence of abundant amino acids, the GATOR2 complex mediates ubiquitination of the NPRL2 core component of the GATOR1 complex, leading to GATOR1 inactivation. In the absence of amino acids, GATOR2 is inhibited, activating the GATOR1 complex. This is Nucleoporin SEH1 (seh1l) from Danio rerio (Zebrafish).